Here is a 194-residue protein sequence, read N- to C-terminus: MALRELKVCLLGDTGVGKSSIVWRFVEDSFDPNINPTIGASFMTKTVQYQNELHKFLIWDTAGQERFRALAPMYYRGSAAAIIVYDITKEETFSTLKNWVRELRQHGPPSIVVAIAGNKCDLTDVREVMERDAKDYADSIHAIFVETSAKNAININELFIEISRRIPSTDANPASGGKGFKLRRQPSEPKRSCC.

GTP is bound at residue 12-20; the sequence is GDTGVGKSS. An Effector region motif is present at residues 34-42; that stretch reads INPTIGASF. GTP-binding positions include 60–64, 118–121, and 148–150; these read DTAGQ, NKCD, and SAK. The disordered stretch occupies residues 170–194; that stretch reads DANPASGGKGFKLRRQPSEPKRSCC. Basic and acidic residues predominate over residues 185-194; it reads QPSEPKRSCC. S-geranylgeranyl cysteine attachment occurs at residues Cys-193 and Cys-194.

It belongs to the small GTPase superfamily. Rab family. Binds EEA1. Interacts (in its GTP-bound form) with RINL. Interacts directly with ZFYVE20. Interacts (in its GTP-bound form) with RABGEF1. As to expression, detected in brain and heart, and at lower levels in lung and spleen.

It localises to the endosome membrane. Its subcellular location is the cell membrane. The protein resides in the early endosome. The protein localises to the late endosome. It is found in the cell projection. It localises to the ruffle. Its subcellular location is the cytoplasmic vesicle. The protein resides in the phagosome. The protein localises to the phagosome membrane. Plays a role in endocytosis and intracellular protein transport. Mediates trafficking of TF from early endosomes to recycling endosomes. Required for NGF-mediated endocytosis of NTRK1, and subsequent neurite outgrowth. Binds GTP and GDP and has low GTPase activity. Alternates between a GTP-bound active form and a GDP-bound inactive form. In Mus musculus (Mouse), this protein is Ras-related protein Rab-22A (Rab22a).